Here is a 272-residue protein sequence, read N- to C-terminus: Undecaprenyl-diphosphatase (272 aa).

The next 8 helical transmembrane spans lie at 2-22 (LELI…WLPI), 50-70 (VIQL…LFPF), 83-103 (FSLW…GVPF), 110-130 (LFYN…LFII), 148-168 (LGYK…IPGT), 195-215 (LAIP…GFAF), 220-240 (LIIL…AIKF), and 250-270 (FKAF…YFLA).

This sequence belongs to the UppP family.

The protein resides in the cell membrane. It catalyses the reaction di-trans,octa-cis-undecaprenyl diphosphate + H2O = di-trans,octa-cis-undecaprenyl phosphate + phosphate + H(+). In terms of biological role, catalyzes the dephosphorylation of undecaprenyl diphosphate (UPP). Confers resistance to bacitracin. This is Undecaprenyl-diphosphatase from Acetivibrio thermocellus (strain ATCC 27405 / DSM 1237 / JCM 9322 / NBRC 103400 / NCIMB 10682 / NRRL B-4536 / VPI 7372) (Clostridium thermocellum).